The sequence spans 182 residues: Small ribosomal subunit protein uS4c (182 aa).

One can recognise an S4 RNA-binding domain in the interval 82 to 143; the sequence is MRLDNILFRL…KERSKVLIQN (62 aa).

Belongs to the universal ribosomal protein uS4 family. As to quaternary structure, part of the 30S ribosomal subunit. Contacts protein S5. The interaction surface between S4 and S5 is involved in control of translational fidelity.

It localises to the plastid. It is found in the chloroplast. In terms of biological role, one of the primary rRNA binding proteins, it binds directly to 16S rRNA where it nucleates assembly of the body of the 30S subunit. Functionally, with S5 and S12 plays an important role in translational accuracy. The chain is Small ribosomal subunit protein uS4c (rps4) from Tigridia sp. (strain Lejeune 1997).